Reading from the N-terminus, the 310-residue chain is uncharacterized protein (310 aa).

Disordered regions lie at residues 1–53 (MSNK…NKEM), 78–127 (PIEN…TITN), and 153–217 (QQPL…SQML). A compositionally biased stretch (acidic residues) spans 11-25 (GEEDEEEDDLYDDYD). Composition is skewed to polar residues over residues 37-49 (STSMNKSDSNISL) and 78-88 (PIENINENPSP). Low complexity-rich tracts occupy residues 94 to 126 (QTQQTQPQQNPISPITPLSSSSPSSSTTTTTIT), 164 to 184 (PSPIILQHQQQQQPLQSQYIT), and 192 to 208 (YQPIASQQSQQPQQIPT). Positions 268–299 (DLIKSVQHNIRQYNDDILTLEEKLEQTEWSLQ) form a coiled coil.

This is an uncharacterized protein from Dictyostelium discoideum (Social amoeba).